A 434-amino-acid chain; its full sequence is 3-phosphoshikimate 1-carboxyvinyltransferase (434 aa).

The 3-phosphoshikimate site is built by Lys-22, Ser-23, and Arg-27. Phosphoenolpyruvate is bound at residue Lys-22. Phosphoenolpyruvate-binding residues include Gly-94 and Arg-122. 3-phosphoshikimate-binding residues include Ser-169, Ser-170, Gln-171, Ser-199, Asp-320, and Lys-347. Gln-171 contacts phosphoenolpyruvate. Asp-320 (proton acceptor) is an active-site residue. Phosphoenolpyruvate is bound by residues Arg-351, Arg-395, and Lys-420.

The protein belongs to the EPSP synthase family. As to quaternary structure, monomer.

It is found in the cytoplasm. The enzyme catalyses 3-phosphoshikimate + phosphoenolpyruvate = 5-O-(1-carboxyvinyl)-3-phosphoshikimate + phosphate. It functions in the pathway metabolic intermediate biosynthesis; chorismate biosynthesis; chorismate from D-erythrose 4-phosphate and phosphoenolpyruvate: step 6/7. Catalyzes the transfer of the enolpyruvyl moiety of phosphoenolpyruvate (PEP) to the 5-hydroxyl of shikimate-3-phosphate (S3P) to produce enolpyruvyl shikimate-3-phosphate and inorganic phosphate. In Ralstonia pickettii (strain 12J), this protein is 3-phosphoshikimate 1-carboxyvinyltransferase.